The sequence spans 387 residues: Phosphoglycerate kinase (387 aa).

Substrate-binding positions include 21–23 (DLN), R36, and 59–62 (HLGR). At K84 the chain carries N6-acetyllysine. R113 and R146 together coordinate substrate. Residues K197, E314, and 340 to 343 (GGDT) each bind ATP.

Belongs to the phosphoglycerate kinase family. Monomer.

Its subcellular location is the cytoplasm. It carries out the reaction (2R)-3-phosphoglycerate + ATP = (2R)-3-phospho-glyceroyl phosphate + ADP. Its pathway is carbohydrate degradation; glycolysis; pyruvate from D-glyceraldehyde 3-phosphate: step 2/5. This chain is Phosphoglycerate kinase, found in Shigella sonnei (strain Ss046).